The primary structure comprises 451 residues: tRNA-2-methylthio-N(6)-dimethylallyladenosine synthase (451 aa).

Positions 11–127 (RHYHITTFGC…LEDLLQQVFD (117 aa)) constitute an MTTase N-terminal domain. [4Fe-4S] cluster-binding residues include cysteine 20, cysteine 56, cysteine 90, cysteine 162, cysteine 166, and cysteine 169. Residues 148–385 (RDSTITAWVN…NHLVAQKAAE (238 aa)) enclose the Radical SAM core domain. Residues 388 to 451 (QRYLGRIEEV…RAFSLTGEIV (64 aa)) enclose the TRAM domain.

The protein belongs to the methylthiotransferase family. MiaB subfamily. As to quaternary structure, monomer. The cofactor is [4Fe-4S] cluster.

The protein localises to the cytoplasm. It catalyses the reaction N(6)-dimethylallyladenosine(37) in tRNA + (sulfur carrier)-SH + AH2 + 2 S-adenosyl-L-methionine = 2-methylsulfanyl-N(6)-dimethylallyladenosine(37) in tRNA + (sulfur carrier)-H + 5'-deoxyadenosine + L-methionine + A + S-adenosyl-L-homocysteine + 2 H(+). Catalyzes the methylthiolation of N6-(dimethylallyl)adenosine (i(6)A), leading to the formation of 2-methylthio-N6-(dimethylallyl)adenosine (ms(2)i(6)A) at position 37 in tRNAs that read codons beginning with uridine. This chain is tRNA-2-methylthio-N(6)-dimethylallyladenosine synthase, found in Rippkaea orientalis (strain PCC 8801 / RF-1) (Cyanothece sp. (strain PCC 8801)).